We begin with the raw amino-acid sequence, 275 residues long: 3',5'-cyclic adenosine monophosphate phosphodiesterase CpdA (275 aa).

Asp-22, His-24, Asp-64, Asn-94, His-164, His-203, and His-205 together coordinate Fe cation. AMP-binding positions include His-24, Asp-64, and 94 to 95; that span reads NH. AMP is bound at residue His-205.

It belongs to the cyclic nucleotide phosphodiesterase class-III family. It depends on Fe(2+) as a cofactor.

It carries out the reaction 3',5'-cyclic AMP + H2O = AMP + H(+). Functionally, hydrolyzes cAMP to 5'-AMP. Plays an important regulatory role in modulating the intracellular concentration of cAMP, thereby influencing cAMP-dependent processes. This chain is 3',5'-cyclic adenosine monophosphate phosphodiesterase CpdA, found in Escherichia coli O157:H7.